The following is a 231-amino-acid chain: 3-oxoadipate CoA-transferase subunit A (231 aa).

25–31 (GGFGTAG) provides a ligand contact to CoA.

The protein belongs to the 3-oxoacid CoA-transferase subunit A family. In terms of assembly, heterodimer.

It carries out the reaction 3-oxoadipate + succinyl-CoA = 3-oxoadipyl-CoA + succinate. It participates in aromatic compound metabolism; beta-ketoadipate pathway; acetyl-CoA and succinyl-CoA from 3-oxoadipate: step 1/2. The polypeptide is 3-oxoadipate CoA-transferase subunit A (pcaI) (Pseudomonas putida (Arthrobacter siderocapsulatus)).